Here is a 332-residue protein sequence, read N- to C-terminus: Holliday junction branch migration complex subunit RuvB (332 aa).

The interval 1–181 is large ATPase domain (RuvB-L); sequence MSRILDNEQM…FGITGHMEYY (181 aa). ATP-binding positions include Leu20, Arg21, Gly62, Lys65, Thr66, Thr67, 128 to 130, Arg171, Tyr181, and Arg218; that span reads EDF. Thr66 serves as a coordination point for Mg(2+). Residues 182–252 form a small ATPAse domain (RuvB-S) region; that stretch reads EEADLTEIVE…ITDQALSMLD (71 aa). Positions 255–332 are head domain (RuvB-H); it reads HEGLDYVDQK…EHLGYEYMEK (78 aa). DNA-binding residues include Arg291, Arg310, Arg312, and Arg315.

This sequence belongs to the RuvB family. In terms of assembly, homohexamer. Forms an RuvA(8)-RuvB(12)-Holliday junction (HJ) complex. HJ DNA is sandwiched between 2 RuvA tetramers; dsDNA enters through RuvA and exits via RuvB. An RuvB hexamer assembles on each DNA strand where it exits the tetramer. Each RuvB hexamer is contacted by two RuvA subunits (via domain III) on 2 adjacent RuvB subunits; this complex drives branch migration. In the full resolvosome a probable DNA-RuvA(4)-RuvB(12)-RuvC(2) complex forms which resolves the HJ.

The protein localises to the cytoplasm. It carries out the reaction ATP + H2O = ADP + phosphate + H(+). In terms of biological role, the RuvA-RuvB-RuvC complex processes Holliday junction (HJ) DNA during genetic recombination and DNA repair, while the RuvA-RuvB complex plays an important role in the rescue of blocked DNA replication forks via replication fork reversal (RFR). RuvA specifically binds to HJ cruciform DNA, conferring on it an open structure. The RuvB hexamer acts as an ATP-dependent pump, pulling dsDNA into and through the RuvAB complex. RuvB forms 2 homohexamers on either side of HJ DNA bound by 1 or 2 RuvA tetramers; 4 subunits per hexamer contact DNA at a time. Coordinated motions by a converter formed by DNA-disengaged RuvB subunits stimulates ATP hydrolysis and nucleotide exchange. Immobilization of the converter enables RuvB to convert the ATP-contained energy into a lever motion, pulling 2 nucleotides of DNA out of the RuvA tetramer per ATP hydrolyzed, thus driving DNA branch migration. The RuvB motors rotate together with the DNA substrate, which together with the progressing nucleotide cycle form the mechanistic basis for DNA recombination by continuous HJ branch migration. Branch migration allows RuvC to scan DNA until it finds its consensus sequence, where it cleaves and resolves cruciform DNA. In Streptococcus gordonii (strain Challis / ATCC 35105 / BCRC 15272 / CH1 / DL1 / V288), this protein is Holliday junction branch migration complex subunit RuvB.